Reading from the N-terminus, the 358-residue chain is Probable undecaprenyl-phosphate N-acetylglucosaminyl 1-phosphate transferase (358 aa).

Transmembrane regions (helical) follow at residues valine 10 to isoleucine 32, methionine 53 to tyrosine 72, arginine 76 to leucine 93, phenylalanine 105 to valine 127, glycine 137 to leucine 157, leucine 164 to leucine 181, valine 186 to tyrosine 205, glycine 218 to tyrosine 235, leucine 240 to isoleucine 262, methionine 292 to leucine 311, and isoleucine 316 to glycine 338.

The protein belongs to the glycosyltransferase 4 family. Requires Mg(2+) as cofactor. The cofactor is Mn(2+).

The protein localises to the cell membrane. It catalyses the reaction di-trans,octa-cis-undecaprenyl phosphate + UDP-N-acetyl-alpha-D-glucosamine = N-acetyl-alpha-D-glucosaminyl-di-trans,octa-cis-undecaprenyl diphosphate + UMP. It participates in cell wall biogenesis; poly(glucopyranosyl N-acetylgalactosamine 1-phosphate) teichoic acid biosynthesis. It functions in the pathway cell wall biogenesis; poly(glycerol phosphate) teichoic acid biosynthesis. Its function is as follows. Catalyzes the formation of undecaprenyl-PP-N-acetylglucosamine. Involved in the synthesis of anionic cell-wall polymers as it mediates the initiation of the linkage unit formation that appears to be common to the two types of teichoic acids attached to the peptidoglycan of B.subtilis; may also be involved in teichuronic acid biosynthesis. This Bacillus subtilis (strain 168) protein is Probable undecaprenyl-phosphate N-acetylglucosaminyl 1-phosphate transferase (tagO).